A 101-amino-acid polypeptide reads, in one-letter code: Urease subunit beta (101 aa).

Belongs to the urease beta subunit family. Heterotrimer of UreA (gamma), UreB (beta) and UreC (alpha) subunits. Three heterotrimers associate to form the active enzyme.

It is found in the cytoplasm. It catalyses the reaction urea + 2 H2O + H(+) = hydrogencarbonate + 2 NH4(+). The protein operates within nitrogen metabolism; urea degradation; CO(2) and NH(3) from urea (urease route): step 1/1. The sequence is that of Urease subunit beta from Cupriavidus metallidurans (strain ATCC 43123 / DSM 2839 / NBRC 102507 / CH34) (Ralstonia metallidurans).